The primary structure comprises 579 residues: Adenine deaminase (579 aa).

It belongs to the metallo-dependent hydrolases superfamily. Adenine deaminase family. Requires Mn(2+) as cofactor.

The catalysed reaction is adenine + H2O + H(+) = hypoxanthine + NH4(+). This is Adenine deaminase from Listeria welshimeri serovar 6b (strain ATCC 35897 / DSM 20650 / CCUG 15529 / CIP 8149 / NCTC 11857 / SLCC 5334 / V8).